A 98-amino-acid chain; its full sequence is MADGVAVTLVVRLTPRGGRDAAEGWALDADGRLYLKVRVASPPVEGAANAALIAFLAKTLKIPRSAVRLAAGETARLKRLELEGVDPADVARAFGPPN.

It belongs to the UPF0235 family.

This chain is UPF0235 protein CCNA_03737, found in Caulobacter vibrioides (strain NA1000 / CB15N) (Caulobacter crescentus).